The following is a 1051-amino-acid chain: MEPGRGGVETVGKFEFSRKDLIGHGAFAVVFKGRHREKHDLEVAVKCINKKNLAKSQTLLGKEIKILKELKHENIVALYDFQEMANSVYLVMEYCNGGDLADYLHTMRTLSEDTVRLFLQQIAGAMRLLHSKGIIHRDLKPQNILLSNPGGRRANPSNIRVKIADFGFARYLQSNMMAATLCGSPMYMAPEVIMSQHYDGKADLWSIGTIVYQCLTGKAPFQASSPQDLRLFYEKNKTLVPAIPRETSAPLRQLLLALLQRNHKDRMDFDEFFHHPFLDASTPIKKSPPVPVPSYPSSGSGSSSSSSSASHLASPPSLGEMPQLQKTLTSPADAAGFLQGSRDSGGSSKDSCDTDDFVMVPAQFPGDLVAEAASAKPPPDSLLCSGSSLVASAGLESHGRTPSPSPTCSSSPSPSGRPGPFSSNRYGASVPIPVPTQVHNYQRIEQNLQSPTQQQTARSSAIRRSGSTTPLGFGRASPSPPSHTDGAMLARKLSLGGGRPYTPSPQVGTIPERPSWSRVPSPQGADVRVGRSPRPGSSVPEHSPRTTGLGCRLHSAPNLSDFHVVRPKLPKPPTDPLGATFSPPQTSAPQPCPGLQSCRPLRGSPKLPDFLQRSPLPPILGSPTKAGPSFDFPKTPSSQNLLTLLARQGVVMTPPRNRTLPDLSEASPFHGQQLGSGLRPAEDTRGPFGRSFSTSRITDLLLKAAFGTQASDSGSTDSLQEKPMEIAPSAGFGGTLHPGARGGGASSPAPVVFTVGSPPSGATPPQSTRTRMFSVGSSSSLGSTGSSSARHLVPGACGEAPELSAPGHCCSLADPLAANLEGAVTFEAPDLPEETLMEQEHTETLHSLRFTLAFAQQVLEIAALKGSASEAAGGPEYQLQESVVADQISQLSREWGFAEQLVLYLKVAELLSSGLQTAIDQIRAGKLCLSSTVKQVVRRLNELYKASVVSCQGLSLRLQRFFLDKQRLLDGIHGVTAERLILSHAVQMVQSAALDEMFQHREGCVPRYHKALLLLEGLQHTLTDQADIENIAKCKLCIERRLSALLSGVYA.

One can recognise a Protein kinase domain in the interval 16–278 (FSRKDLIGHG…FDEFFHHPFL (263 aa)). ATP-binding positions include 22–30 (IGHGAFAVV) and K46. D138 acts as the Proton acceptor in catalysis. K162 is modified (N6-acetyllysine). Disordered stretches follow at residues 283-323 (PIKK…EMPQ), 335-358 (AGFL…DDFV), and 394-554 (GLES…CRLH). Residues 287 to 416 (SPPVPVPSYP…TCSSSPSPSG (130 aa)) are interaction with GABARAP and GABARAPL2. Low complexity-rich tracts occupy residues 295 to 318 (YPSS…PPSL), 340 to 349 (GSRDSGGSSK), and 400 to 423 (RTPS…PFSS). Position 317 is a phosphoserine; by AMPK (S317). S403 and S450 each carry phosphoserine. Over residues 437–459 (QVHNYQRIEQNLQSPTQQQTARS) the composition is skewed to polar residues. A Phosphothreonine modification is found at T456. S467, S477, S479, and S521 each carry phosphoserine. The residue at position 555 (S555) is a Phosphoserine; by AMPK. A Phosphothreonine modification is found at T574. An N6-acetyllysine modification is found at K606. Position 635 is a phosphothreonine (T635). S637 carries the phosphoserine; by AMPK modification. At S638 the chain carries Phosphoserine. Disordered regions lie at residues 661 to 686 (PDLS…DTRG) and 727 to 787 (APSA…TGSS). A compositionally biased stretch (gly residues) spans 731–745 (GFGGTLHPGARGGGA). S757 is subject to Phosphoserine; by MTOR. S774 carries the phosphoserine modification. Residues 774–787 (SVGSSSSLGSTGSS) show a composition bias toward low complexity. S777 bears the Phosphoserine; by AMPK mark. The interval 829-1051 (PDLPEETLME…LSALLSGVYA (223 aa)) is C-terminal domain; mediates interaction with SESN2.

Belongs to the protein kinase superfamily. Ser/Thr protein kinase family. APG1/unc-51/ULK1 subfamily. Interacts with GABARAP and GABARAPL2. Interacts (via C-terminus) with ATG13. Part of a complex consisting of ATG13, ATG101, ULK1 and RB1CC1. Associates with the mammalian target of rapamycin complex 1 (mTORC1) through an interaction with RPTOR; the association depends on nutrient conditions and is reduced during starvation. Interacts with FEZ1; SCOC interferes with FEZ1-binding. Interacts with TBC1D14. Interacts (phosphorylated form) with TRIM5. When phosphorylated at Ser-317, interacts with MEFV and BECN1 simultaneously. Interacts with TRIM21 and IRF3, in the presence of TRIM21. Interacts with SESN2. Interacts with SQSTM1. Interacts with C9orf72. Interacts with WDR45. Interacts with ATG13; this interaction is increased in the absence of TMEM39A. Interacts with WIPI2. Interacts with ATP2A2. Interacts with AMBRA1. Interacts with Irgm1; promoting the coassembly of ULK1 and BECN1. Post-translationally, autophosphorylated. Phosphorylated under nutrient-rich conditions; dephosphorylated during starvation or following treatment with rapamycin. In response to nutrient limitation, phosphorylated and activated by AMPK, leading to activate autophagy. Under nutrient sufficiency, phosphorylated by MTOR/mTOR, disrupting the interaction with AMPK and preventing activation of ULK1. In terms of processing, ubiquitinated via 'Lys-63'-linkage by a complex composed of AMBRA1 and TRAF6 following autophagy induction, promoting ULK1 stability and kinase activity. Deubiquitinated by USP20; leading to ULK1 stability and autophagy initiation. Acetylated by KAT5/TIP60 under autophagy induction, promoting protein kinase activity.

The protein resides in the cytoplasm. It is found in the cytosol. Its subcellular location is the preautophagosomal structure. The enzyme catalyses L-seryl-[protein] + ATP = O-phospho-L-seryl-[protein] + ADP + H(+). The catalysed reaction is L-threonyl-[protein] + ATP = O-phospho-L-threonyl-[protein] + ADP + H(+). Its activity is regulated as follows. Acetylation by KAT5/TIP60 stimulates the protein kinase activity. The protein kinase activity is activated by unanchored 'Lys-63'-linked polyubiquitin chains: unanchored 'Lys-63'-linked polyubiquitin chains are catalyzed by TRIM32 in an AMBRA1-dependent manner. Serine/threonine-protein kinase involved in autophagy in response to starvation. Acts upstream of phosphatidylinositol 3-kinase PIK3C3 to regulate the formation of autophagophores, the precursors of autophagosomes. Part of regulatory feedback loops in autophagy: acts both as a downstream effector and negative regulator of mammalian target of rapamycin complex 1 (mTORC1) via interaction with RPTOR. Activated via phosphorylation by AMPK and also acts as a regulator of AMPK by mediating phosphorylation of AMPK subunits PRKAA1, PRKAB2 and PRKAG1, leading to negatively regulate AMPK activity. May phosphorylate ATG13/KIAA0652 and RPTOR; however such data need additional evidences. Plays a role early in neuronal differentiation and is required for granule cell axon formation. Also phosphorylates SESN2 and SQSTM1 to regulate autophagy. Phosphorylates FLCN, promoting autophagy. Phosphorylates AMBRA1 in response to autophagy induction, releasing AMBRA1 from the cytoskeletal docking site to induce autophagosome nucleation. Phosphorylates ATG4B, leading to inhibit autophagy by decreasing both proteolytic activation and delipidation activities of ATG4B. The chain is Serine/threonine-protein kinase ULK1 (Ulk1) from Mus musculus (Mouse).